Here is a 396-residue protein sequence, read N- to C-terminus: tRNA-specific 2-thiouridylase MnmA (396 aa).

ATP-binding positions include 35–42 and leucine 61; that span reads GLSGGVDS. The Nucleophile role is filled by cysteine 122. Cysteines 122 and 221 form a disulfide. Glycine 147 contacts ATP. The segment at 171–173 is interaction with tRNA; it reads KDQ. The Cysteine persulfide intermediate role is filled by cysteine 221. Residues 326–327 are interaction with tRNA; the sequence is RY.

This sequence belongs to the MnmA/TRMU family.

It is found in the cytoplasm. The catalysed reaction is S-sulfanyl-L-cysteinyl-[protein] + uridine(34) in tRNA + AH2 + ATP = 2-thiouridine(34) in tRNA + L-cysteinyl-[protein] + A + AMP + diphosphate + H(+). Functionally, catalyzes the 2-thiolation of uridine at the wobble position (U34) of tRNA, leading to the formation of s(2)U34. The protein is tRNA-specific 2-thiouridylase MnmA of Parasynechococcus marenigrum (strain WH8102).